The following is a 220-amino-acid chain: Zinc finger protein 36 (220 aa).

A C2H2-type 1 zinc finger spans residues 73–95 (FRCTVCGKAFASYQALGGHKSSH). The tract at residues 90–134 (GHKSSHRKPPSPGDHYGAAAAAQQLASAGDSKEDSASSAAGSTGP) is disordered. The span at 107–117 (AAAAAQQLASA) shows a compositional bias: low complexity. Residues 135-157 (HRCTICRRSFATGQALGGHKRCH) form a C2H2-type 2 zinc finger.

Probable transcription factor involved in abscisic acid (ABA) signaling. Required for the regulation of the cross-talk between NADPH oxidase, hydrogen peroxide and MAP kinase in ABA signaling. Regulates the expression of the NADPH oxidase genes RBOHB and RBOHE, and the MAPK genes MPK1, MPK4, MPK5, MPK7 and MPK14. Regulates ABA-induced hydrogen peroxide production and antioxidant defense. Required for tolerance to water stress and oxidative stress. The polypeptide is Zinc finger protein 36 (Oryza sativa subsp. japonica (Rice)).